Here is a 225-residue protein sequence, read N- to C-terminus: Phosphoglycolate phosphatase (225 aa).

Catalysis depends on Asp-11, which acts as the Nucleophile. Asp-11 and Asp-13 together coordinate Mg(2+). Residue Lys-153 participates in substrate binding. Asp-176 and Asp-180 together coordinate Mg(2+).

The protein belongs to the archaeal SPP-like hydrolase family. The cofactor is Mg(2+).

The catalysed reaction is 2-phosphoglycolate + H2O = glycolate + phosphate. Its function is as follows. Catalyzes the dephosphorylation of 2-phosphoglycolate. The sequence is that of Phosphoglycolate phosphatase from Halobacterium salinarum (strain ATCC 29341 / DSM 671 / R1).